Reading from the N-terminus, the 310-residue chain is Inorganic pyrophosphatase, mitochondrial (310 aa).

The N-terminal 30 residues, Met-1–Asn-30, are a transit peptide targeting the mitochondrion. Residues Asp-152, Asp-157, and Asp-189 each contribute to the Mg(2+) site.

It belongs to the PPase family. Homodimer that binds non-covalently to a protein complex in the inner mitochondrial membrane. The cofactor is Mg(2+).

It localises to the mitochondrion. It catalyses the reaction diphosphate + H2O = 2 phosphate + H(+). Functionally, involved in energy production. Its activity is stimulated by uncouplers of ATP synthesis. This chain is Inorganic pyrophosphatase, mitochondrial (PPA2), found in Saccharomyces cerevisiae (strain ATCC 204508 / S288c) (Baker's yeast).